We begin with the raw amino-acid sequence, 390 residues long: Galactokinase (390 aa).

Substrate is bound at residue 33 to 36 (EHTD). ATP-binding positions include Ser-67 and 124-130 (GAGLSSS). Residues Ser-130 and Glu-162 each coordinate Mg(2+). The active-site Proton acceptor is Asp-174. Tyr-224 is a binding site for substrate.

The protein belongs to the GHMP kinase family. GalK subfamily.

The protein resides in the cytoplasm. The enzyme catalyses alpha-D-galactose + ATP = alpha-D-galactose 1-phosphate + ADP + H(+). It participates in carbohydrate metabolism; galactose metabolism. Functionally, catalyzes the transfer of the gamma-phosphate of ATP to D-galactose to form alpha-D-galactose-1-phosphate (Gal-1-P). This chain is Galactokinase, found in Bacillus subtilis (strain 168).